Consider the following 139-residue polypeptide: MNLNLRVLTPNRVVWDSPVNEIILSTNSGKIGILPNHASLVTAVDIAVMQIRINSQWSTIVLMGGFAKIDNNELLLLVYDAEKGVDIDPQEAQETFNKAKTNLNKAEGKRQKIEADLAVKKARTRLEAINVLTPTSISN.

Belongs to the ATPase epsilon chain family. As to quaternary structure, F-type ATPases have 2 components, CF(1) - the catalytic core - and CF(0) - the membrane proton channel. CF(1) has five subunits: alpha(3), beta(3), gamma(1), delta(1), epsilon(1). CF(0) has three main subunits: a, b and c.

It localises to the plastid. It is found in the chloroplast thylakoid membrane. Its function is as follows. Produces ATP from ADP in the presence of a proton gradient across the membrane. The sequence is that of ATP synthase epsilon chain, chloroplastic from Welwitschia mirabilis (Tree tumbo).